Consider the following 119-residue polypeptide: Large ribosomal subunit protein bL20 (119 aa).

This sequence belongs to the bacterial ribosomal protein bL20 family.

Its function is as follows. Binds directly to 23S ribosomal RNA and is necessary for the in vitro assembly process of the 50S ribosomal subunit. It is not involved in the protein synthesizing functions of that subunit. This chain is Large ribosomal subunit protein bL20, found in Dichelobacter nodosus (strain VCS1703A).